Here is a 108-residue protein sequence, read N- to C-terminus: Small proline-rich protein 2H (108 aa).

Residues 1–11 (MSYQQQQCKQP) show a composition bias toward low complexity. The segment at 1-22 (MSYQQQQCKQPCQPPPVCPPPQ) is disordered. Residues 12–22 (CQPPPVCPPPQ) are compositionally biased toward pro residues. 7 consecutive repeat copies span residues 21-29 (PQCPEPCPP), 30-38 (PKCPEPCPP), 39-47 (PKCTEPCPP), 48-56 (PKCPEPCPP), 57-65 (PKCPEPCPP), 66-74 (PKCPEPCPP), and 75-83 (PKCTEPCPP). The tract at residues 21 to 83 (PQCPEPCPPP…PPKCTEPCPP (63 aa)) is 7 X 9 AA tandem repeats of P-[KQ]-C-[PT]-E-P-C-P-P. A disordered region spans residues 83–108 (PPSYQQKCPSVQPSPPCQQKCPPKNK). Residues 87-108 (QQKCPSVQPSPPCQQKCPPKNK) are compositionally biased toward low complexity.

Belongs to the cornifin (SPRR) family. In terms of tissue distribution, expressed weakly in uterus.

It is found in the cytoplasm. Cross-linked envelope protein of keratinocytes. It is a keratinocyte protein that first appears in the cell cytosol, but ultimately becomes cross-linked to membrane proteins by transglutaminase. All that results in the formation of an insoluble envelope beneath the plasma membrane. The chain is Small proline-rich protein 2H (Sprr2h) from Mus musculus (Mouse).